A 359-amino-acid chain; its full sequence is Membrane-bound lytic murein transglycosylase C (359 aa).

The signal sequence occupies residues 1 to 16 (MKKYLALALIAPLLIS). A lipid anchor (N-palmitoyl cysteine) is attached at Cys-17. Cys-17 is lipidated: S-diacylglycerol cysteine.

Belongs to the transglycosylase Slt family.

It is found in the cell outer membrane. The catalysed reaction is Exolytic cleavage of the (1-&gt;4)-beta-glycosidic linkage between N-acetylmuramic acid (MurNAc) and N-acetylglucosamine (GlcNAc) residues in peptidoglycan, from either the reducing or the non-reducing ends of the peptidoglycan chains, with concomitant formation of a 1,6-anhydrobond in the MurNAc residue.. In terms of biological role, murein-degrading enzyme. May play a role in recycling of muropeptides during cell elongation and/or cell division. In Escherichia coli O127:H6 (strain E2348/69 / EPEC), this protein is Membrane-bound lytic murein transglycosylase C.